Here is a 202-residue protein sequence, read N- to C-terminus: MTVFVFAFYLFAVVAVVAGLMVVLSKNPVHAVLWLILTFLSAAGLFVLMGAEFVAMLLIIVYVGAVAVLFLFVVMMLDIDFAALRGQLVRYAPVGGLIALVMLAQLATGLMVWNTADAANGLRAAPAPEGVENTAALGMILYDRYLYLFQGAGLVLLVAMIGAILLTLRHRTDIKRQNVLAQMHRDPAKALEMVDVKPGQGL.

5 helical membrane-spanning segments follow: residues 3–23 (VFVF…LMVV), 31–51 (AVLW…LMGA), 53–73 (FVAM…FLFV), 93–113 (PVGG…LMVW), and 146–166 (LYLF…AILL).

This sequence belongs to the complex I subunit 6 family. In terms of assembly, NDH-1 is composed of 14 different subunits. Subunits NuoA, H, J, K, L, M, N constitute the membrane sector of the complex.

The protein localises to the cellular chromatophore membrane. It carries out the reaction a quinone + NADH + 5 H(+)(in) = a quinol + NAD(+) + 4 H(+)(out). Its function is as follows. NDH-1 shuttles electrons from NADH, via FMN and iron-sulfur (Fe-S) centers, to quinones in the respiratory chain. The immediate electron acceptor for the enzyme in this species is believed to be ubiquinone. Couples the redox reaction to proton translocation (for every two electrons transferred, four hydrogen ions are translocated across the cytoplasmic membrane), and thus conserves the redox energy in a proton gradient. In Rhodobacter capsulatus (Rhodopseudomonas capsulata), this protein is NADH-quinone oxidoreductase subunit J (nuoJ).